Consider the following 306-residue polypeptide: Tryptophan 2,3-dioxygenase (306 aa).

The disordered stretch occupies residues Met-1–Ala-33. Substrate is bound by residues Phe-75–His-79, Tyr-137, and Arg-141. His-264 contacts heme. Thr-278 contributes to the substrate binding site.

This sequence belongs to the tryptophan 2,3-dioxygenase family. As to quaternary structure, homotetramer. It depends on heme as a cofactor.

It catalyses the reaction L-tryptophan + O2 = N-formyl-L-kynurenine. The protein operates within amino-acid degradation; L-tryptophan degradation via kynurenine pathway; L-kynurenine from L-tryptophan: step 1/2. Functionally, heme-dependent dioxygenase that catalyzes the oxidative cleavage of the L-tryptophan (L-Trp) pyrrole ring and converts L-tryptophan to N-formyl-L-kynurenine. Catalyzes the oxidative cleavage of the indole moiety. The chain is Tryptophan 2,3-dioxygenase from Burkholderia pseudomallei (strain 1106a).